Reading from the N-terminus, the 488-residue chain is Catalase (488 aa).

Positions 1–26 (MTDRKNLTTNQGVPVGDNQNSMTAGR) are disordered. Positions 7 to 23 (LTTNQGVPVGDNQNSMT) are enriched in polar residues. Residues His-55 and Asn-128 contribute to the active site. Tyr-338 is a binding site for heme.

It belongs to the catalase family. Requires heme as cofactor.

Its subcellular location is the cytoplasm. It carries out the reaction 2 H2O2 = O2 + 2 H2O. Functionally, decomposes hydrogen peroxide into water and oxygen; serves to protect cells from the toxic effects of hydrogen peroxide. In Listeria monocytogenes serovar 1/2a (strain ATCC BAA-679 / EGD-e), this protein is Catalase (kat).